The primary structure comprises 420 residues: Senescence-associated protein SPA15, chloroplastic (420 aa).

Residues 1 to 68 (MAKPNGIIYS…YIATRGSSLR (68 aa)) constitute a chloroplast transit peptide. The tract at residues 85 to 111 (EYRDSSDTSSMQGKDKDPASLGKSGTP) is disordered.

It belongs to the ATA15/OSA15 family. In terms of tissue distribution, expressed in leaves.

The protein resides in the plastid. It is found in the chloroplast. Functionally, may be involved in the regulation of leaf senescence. The chain is Senescence-associated protein SPA15, chloroplastic from Ipomoea batatas (Sweet potato).